Consider the following 652-residue polypeptide: Putative asparagine synthetase [glutamine-hydrolyzing] (652 aa).

C2 serves as the catalytic For GATase activity. The 230-residue stretch at 2–231 (CGLLAFVAAP…SGCFARIRAD (230 aa)) folds into the Glutamine amidotransferase type-2 domain. L-glutamine is bound by residues 60-64 (RLSII), 89-91 (NGE), and D115. Residue 382 to 383 (SG) coordinates ATP.

Belongs to the asparagine synthetase family.

The enzyme catalyses L-aspartate + L-glutamine + ATP + H2O = L-asparagine + L-glutamate + AMP + diphosphate + H(+). The protein operates within amino-acid biosynthesis; L-asparagine biosynthesis; L-asparagine from L-aspartate (L-Gln route): step 1/1. The protein is Putative asparagine synthetase [glutamine-hydrolyzing] (asnB) of Mycobacterium bovis (strain ATCC BAA-935 / AF2122/97).